Reading from the N-terminus, the 652-residue chain is Na(+)/H(+) antiporter NhaA 1 (652 aa).

Residues 1–427 (MTGELPRGRR…VGASLTTWLV (427 aa)) are na(+)/H(+) antiporter NhaA. Transmembrane regions (helical) follow at residues 27 to 47 (AFLH…VVAL), 78 to 98 (LRYW…GLEV), 114 to 134 (TLPL…YLAF), 142 to 162 (VGWG…LAVL), 173 to 193 (FLLT…AIAY), 200 to 220 (TALF…AAGG), 227 to 247 (LLLG…PVVV), 312 to 332 (LIVP…ELLA), 343 to 363 (VLFA…MLVA), 376 to 396 (WAAI…ALLI), and 411 to 431 (IGIL…FRLA). The Thioredoxin domain occupies 428 to 623 (FRLAARLPPA…LSAAVTSAFA (196 aa)). Residues 626 to 652 (RLRPRDDREPDRRREVGSEQPDEEPGT) are disordered. Basic and acidic residues predominate over residues 628–642 (RPRDDREPDRRREVG).

The protein in the N-terminal section; belongs to the NhaA Na(+)/H(+) (TC 2.A.33) antiporter family.

The protein resides in the cell membrane. The enzyme catalyses Na(+)(in) + 2 H(+)(out) = Na(+)(out) + 2 H(+)(in). Na(+)/H(+) antiporter that extrudes sodium in exchange for external protons. This Salinispora arenicola (strain CNS-205) protein is Na(+)/H(+) antiporter NhaA 1.